The chain runs to 229 residues: Peptidase E (229 aa).

Catalysis depends on charge relay system residues S120, D135, and H157.

The protein belongs to the peptidase S51 family.

The protein resides in the cytoplasm. It carries out the reaction Dipeptidase E catalyzes the hydrolysis of dipeptides Asp-|-Xaa. It does not act on peptides with N-terminal Glu, Asn or Gln, nor does it cleave isoaspartyl peptides.. Its function is as follows. Hydrolyzes dipeptides containing N-terminal aspartate residues. May play a role in allowing the cell to use peptide aspartate to spare carbon otherwise required for the synthesis of the aspartate family of amino acids. This chain is Peptidase E (pepE), found in Salmonella typhimurium (strain LT2 / SGSC1412 / ATCC 700720).